The following is a 263-amino-acid chain: Uroporphyrinogen-III C-methyltransferase (263 aa).

S-adenosyl-L-homocysteine contacts are provided by residues Pro20, 96–98, 126–127, Met180, and Ala237; these read GGD and TA.

It belongs to the precorrin methyltransferase family.

The catalysed reaction is uroporphyrinogen III + 2 S-adenosyl-L-methionine = precorrin-2 + 2 S-adenosyl-L-homocysteine + H(+). Its pathway is cofactor biosynthesis; adenosylcobalamin biosynthesis; precorrin-2 from uroporphyrinogen III: step 1/1. The protein operates within porphyrin-containing compound metabolism; siroheme biosynthesis; precorrin-2 from uroporphyrinogen III: step 1/1. In terms of biological role, catalyzes the two successive C-2 and C-7 methylation reactions involved in the conversion of uroporphyrinogen III to precorrin-2 via the intermediate formation of precorrin-1. It is a step in the biosynthesis of both cobalamin (vitamin B12) and siroheme. The chain is Uroporphyrinogen-III C-methyltransferase (cobA) from Synechocystis sp. (strain ATCC 27184 / PCC 6803 / Kazusa).